Here is a 286-residue protein sequence, read N- to C-terminus: Bifunctional protein FolD (286 aa).

NADP(+) is bound by residues 165-167 and serine 190; that span reads GRS.

It belongs to the tetrahydrofolate dehydrogenase/cyclohydrolase family. As to quaternary structure, homodimer.

It carries out the reaction (6R)-5,10-methylene-5,6,7,8-tetrahydrofolate + NADP(+) = (6R)-5,10-methenyltetrahydrofolate + NADPH. The catalysed reaction is (6R)-5,10-methenyltetrahydrofolate + H2O = (6R)-10-formyltetrahydrofolate + H(+). It functions in the pathway one-carbon metabolism; tetrahydrofolate interconversion. Functionally, catalyzes the oxidation of 5,10-methylenetetrahydrofolate to 5,10-methenyltetrahydrofolate and then the hydrolysis of 5,10-methenyltetrahydrofolate to 10-formyltetrahydrofolate. This Burkholderia orbicola (strain MC0-3) protein is Bifunctional protein FolD.